The following is a 262-amino-acid chain: Thrombin-like enzyme gyroxin B1.3 (262 aa).

Residues 1–18 form the signal peptide; it reads MVLIRVLANLLILQLSYA. Residues 19–262 constitute a propeptide that is removed on maturation; it reads QKSSELVIGG…AGSETVNCPS (244 aa). In terms of domain architecture, Peptidase S1 spans 25–253; that stretch reads VIGGDECNIN…HLDWIQNIIA (229 aa). Cystine bridges form between cysteine 31–cysteine 165, cysteine 52–cysteine 68, cysteine 102–cysteine 260, cysteine 144–cysteine 214, cysteine 176–cysteine 193, and cysteine 204–cysteine 229. Histidine 67 (charge relay system) is an active-site residue. An N-linked (GlcNAc...) asparagine glycan is attached at asparagine 105. The Charge relay system role is filled by aspartate 112. Residue serine 208 is the Charge relay system of the active site.

This sequence belongs to the peptidase S1 family. Snake venom subfamily. In terms of assembly, monomer. As to expression, expressed by the venom gland.

The protein resides in the secreted. In terms of biological role, thrombin-like snake venom serine protease. Displays a specificity similar to trypsin. Releases only fibrinopeptide A in the conversion of fibrinogen to fibrin. Reversibly increases the permeability of the blood brain barrier (BBB) in mice. Induces the barrel rotation syndrome in mice, which is manifested by gyroxin-like, rapid rolling motions. This syndrome may be due to its effect on BBB permeability, and certainly also to other actions affecting endogenous substrates present in the endothelium, nervous tissues or blood. Also shows a moderate inhibitory activity on the human voltage-gated potassium channel Kv10.1/KCNH1/EAG1 (58% current inhibition at 5 uM). It blocks Kv10.1/KCNH1/EAG1 in a time and dose-dependent manner and with a mechanism independent of its enzymatic activity. It may have a preference in interacting with Kv10.1/KCNH1/EAG1 in its closed state, since the inhibitory effect of the toxin is decreased at more depolarized potentials. The polypeptide is Thrombin-like enzyme gyroxin B1.3 (Crotalus durissus terrificus (South American rattlesnake)).